Consider the following 61-residue polypeptide: Small ribosomal subunit protein bS21 (61 aa).

The interval Glu36–Arg61 is disordered. Basic residues predominate over residues Val43–Arg61.

Belongs to the bacterial ribosomal protein bS21 family.

This is Small ribosomal subunit protein bS21 (rpsU) from Caldanaerobacter subterraneus subsp. tengcongensis (strain DSM 15242 / JCM 11007 / NBRC 100824 / MB4) (Thermoanaerobacter tengcongensis).